Consider the following 177-residue polypeptide: Large ribosomal subunit protein uL6 (177 aa).

A compositionally biased stretch (basic and acidic residues) spans 152–171 (RPPEPYKGKGVRYDDEEVRR). Residues 152-177 (RPPEPYKGKGVRYDDEEVRRKEAKKK) form a disordered region.

This sequence belongs to the universal ribosomal protein uL6 family. As to quaternary structure, part of the 50S ribosomal subunit.

In terms of biological role, this protein binds to the 23S rRNA, and is important in its secondary structure. It is located near the subunit interface in the base of the L7/L12 stalk, and near the tRNA binding site of the peptidyltransferase center. The chain is Large ribosomal subunit protein uL6 from Shewanella sp. (strain ANA-3).